Here is a 546-residue protein sequence, read N- to C-terminus: Tegument protein UL21 homolog (546 aa).

The protein belongs to the alphaherpesvirinae HHV-1 UL21 protein family.

The protein localises to the virion tegument. It is found in the host cytoplasm. Its subcellular location is the host nucleus. Its function is as follows. May facilitate the viral transport through neural circuits. This is Tegument protein UL21 homolog (MDV033) from Gallus gallus (Chicken).